The following is a 234-amino-acid chain: Isoprenyl transferase (234 aa).

Residue Asp-13 is part of the active site. Mg(2+) is bound at residue Asp-13. Substrate-binding positions include 14-17 (GNGR), Trp-18, Arg-26, His-30, and 58-60 (STE). Catalysis depends on Asn-61, which acts as the Proton acceptor. Residues Trp-62, Arg-64, Arg-180, and 186–188 (RLS) each bind substrate. Glu-199 contributes to the Mg(2+) binding site.

Belongs to the UPP synthase family. In terms of assembly, homodimer. It depends on Mg(2+) as a cofactor.

In terms of biological role, catalyzes the condensation of isopentenyl diphosphate (IPP) with allylic pyrophosphates generating different type of terpenoids. The polypeptide is Isoprenyl transferase (uppS) (Helicobacter pylori (strain ATCC 700392 / 26695) (Campylobacter pylori)).